The following is an 85-amino-acid chain: U4-theraphotoxin-Hhn1i (85 aa).

A signal peptide spans 1 to 22; it reads MKVTLIAILTCAAVLVLHTTAA. A propeptide spanning residues 23–48 is cleaved from the precursor; sequence EELEAESQLMEVGMPDTELAAVDEER. 3 disulfides stabilise this stretch: Cys-52–Cys-66, Cys-56–Cys-77, and Cys-71–Cys-82.

This sequence belongs to the neurotoxin 12 (Hwtx-2) family. 02 (Hwtx-2) subfamily. In terms of tissue distribution, expressed by the venom gland.

Its subcellular location is the secreted. In terms of biological role, postsynaptic neurotoxin. The protein is U4-theraphotoxin-Hhn1i of Cyriopagopus hainanus (Chinese bird spider).